The chain runs to 256 residues: Small ribosomal subunit protein eS1 (256 aa).

The span at 1–18 shows a compositional bias: basic residues; it reads MAVGKNKRLSKGKKGVKK. Positions 1–21 are disordered; that stretch reads MAVGKNKRLSKGKKGVKKRTV. Residue Ala-2 is modified to N-acetylalanine; partial.

It belongs to the eukaryotic ribosomal protein eS1 family. As to quaternary structure, component of the small ribosomal subunit. Mature ribosomes consist of a small (40S) and a large (60S) subunit. The 40S subunit contains about 33 different proteins and 1 molecule of RNA (18S). The 60S subunit contains about 49 different proteins and 3 molecules of RNA (25S, 5.8S and 5S).

The protein localises to the cytoplasm. The polypeptide is Small ribosomal subunit protein eS1 (rps1) (Neosartorya fischeri (strain ATCC 1020 / DSM 3700 / CBS 544.65 / FGSC A1164 / JCM 1740 / NRRL 181 / WB 181) (Aspergillus fischerianus)).